The primary structure comprises 493 residues: Cysteine--tRNA ligase (493 aa).

Cysteine 31 is a Zn(2+) binding site. A 'HIGH' region motif is present at residues 33–43; that stretch reads PTVYGDAHLGH. 3 residues coordinate Zn(2+): cysteine 226, histidine 251, and glutamate 255. Residues 283–287 carry the 'KMSKS' region motif; the sequence is KMGKS. An ATP-binding site is contributed by lysine 286.

Belongs to the class-I aminoacyl-tRNA synthetase family. As to quaternary structure, monomer. The cofactor is Zn(2+).

Its subcellular location is the cytoplasm. The catalysed reaction is tRNA(Cys) + L-cysteine + ATP = L-cysteinyl-tRNA(Cys) + AMP + diphosphate. This Bacteroides thetaiotaomicron (strain ATCC 29148 / DSM 2079 / JCM 5827 / CCUG 10774 / NCTC 10582 / VPI-5482 / E50) protein is Cysteine--tRNA ligase.